The primary structure comprises 464 residues: Soluble pyridine nucleotide transhydrogenase (464 aa).

35–44 (EASSQVGGSC) contacts FAD.

The protein belongs to the class-I pyridine nucleotide-disulfide oxidoreductase family. FAD is required as a cofactor.

It localises to the cytoplasm. The catalysed reaction is NAD(+) + NADPH = NADH + NADP(+). Functionally, conversion of NADPH, generated by peripheral catabolic pathways, to NADH, which can enter the respiratory chain for energy generation. The chain is Soluble pyridine nucleotide transhydrogenase from Marinomonas sp. (strain MWYL1).